Here is a 37-residue protein sequence, read N- to C-terminus: Large ribosomal subunit protein bL36 (37 aa).

It belongs to the bacterial ribosomal protein bL36 family.

The sequence is that of Large ribosomal subunit protein bL36 from Natranaerobius thermophilus (strain ATCC BAA-1301 / DSM 18059 / JW/NM-WN-LF).